The chain runs to 268 residues: Tryptophan synthase alpha chain (268 aa).

Catalysis depends on proton acceptor residues Glu49 and Asp60.

Belongs to the TrpA family. As to quaternary structure, tetramer of two alpha and two beta chains.

It carries out the reaction (1S,2R)-1-C-(indol-3-yl)glycerol 3-phosphate + L-serine = D-glyceraldehyde 3-phosphate + L-tryptophan + H2O. It functions in the pathway amino-acid biosynthesis; L-tryptophan biosynthesis; L-tryptophan from chorismate: step 5/5. In terms of biological role, the alpha subunit is responsible for the aldol cleavage of indoleglycerol phosphate to indole and glyceraldehyde 3-phosphate. The sequence is that of Tryptophan synthase alpha chain from Vibrio vulnificus (strain YJ016).